The following is a 125-amino-acid chain: Succinate dehydrogenase assembly factor 3, mitochondrial (125 aa).

The transit peptide at 1–30 (MTGRHVSRVRSLYRRILQLHRALPPDLKAL) directs the protein to the mitochondrion.

It belongs to the complex I LYR family. SDHAF3 subfamily. Interacts with Sdhb within an Sdha-Sdhb subcomplex.

It localises to the mitochondrion matrix. Its function is as follows. Plays an essential role in the assembly of succinate dehydrogenase (SDH), an enzyme complex (also referred to as respiratory complex II) that is a component of both the tricarboxylic acid (TCA) cycle and the mitochondrial electron transport chain, and which couples the oxidation of succinate to fumarate with the reduction of ubiquinone (coenzyme Q) to ubiquinol. Promotes maturation of the iron-sulfur protein subunit Sdhb of the SDH catalytic dimer, protecting it from the deleterious effects of oxidants. May act together with SDHAF1. The polypeptide is Succinate dehydrogenase assembly factor 3, mitochondrial (Rattus norvegicus (Rat)).